Here is a 148-residue protein sequence, read N- to C-terminus: MLSCWVLLLALLGGACALPAPLGYSQALAQAVDSYNQRPEVQNAFRLLSADPEPGPNVQLSSLHNLNFTIMETRCQARSGAQLDSCEFKEDGLVKDCAAPVVLQGGRAVLDVTCVDSMADPVRVKRVWPLVIRTVIAGYNLYRAIKKK.

The N-terminal stretch at 1–17 is a signal peptide; it reads MLSCWVLLLALLGGACA. The propeptide occupies 18 to 122; that stretch reads LPAPLGYSQA…TCVDSMADPV (105 aa). Intrachain disulfides connect Cys-75–Cys-86 and Cys-97–Cys-114.

The protein belongs to the cathelicidin family. Detected in gizzard, liver, small intestine, large intestine, cloaca, bursa of Fabricius, gall bladder, lung, trachea, kidney, testis and bone marrow.

The protein localises to the secreted. Its function is as follows. Binds bacterial lipopolysaccharide (LPS). Has potent antimicrobial activity against Gram-positive and Gram-negative bacteria (in vitro). Has hemolytic activity (in vitro). May play a role in the innate immune response. The protein is Cathelicidin-1 (CATHL1) of Gallus gallus (Chicken).